A 131-amino-acid chain; its full sequence is Small ribosomal subunit protein uS8 (131 aa).

The protein belongs to the universal ribosomal protein uS8 family. In terms of assembly, part of the 30S ribosomal subunit. Contacts proteins S5 and S12.

Its function is as follows. One of the primary rRNA binding proteins, it binds directly to 16S rRNA central domain where it helps coordinate assembly of the platform of the 30S subunit. The protein is Small ribosomal subunit protein uS8 of Ralstonia nicotianae (strain ATCC BAA-1114 / GMI1000) (Ralstonia solanacearum).